Reading from the N-terminus, the 534-residue chain is MTSAVPLLSRWCRATLAARKKLTHKAEPAFCKGIWWQCVRSLAALSNGPETGDMRGYLTSNYKEVKRSINEELVPSVSSSLLNPDAIFANNEMSLEDIEVYGFDYDYTLAFYSKDLHTLIFNTARDLLINEHRYPKEIRSYEYDPNFAIRGLHYDVHKALLMKIDSFHYIQLGTVYRGLNVVPDFYGKSSEGNTLKQFMDIFSLPEMTLLSCVNEYFLKNNIDYEPVHLYKDVKEAIRDVHVKGILYRAVEADIERYICYGERTQAVLSKLANLGKKMFLITNSPSSFVNKGMNFIVGKDWRDLFDVVIVQADKPNFFNDKRRPFRKVAERGILLWDKIHHLEKGQTYKQGNLFEFLKLTGWRGSKVLYFGDHIYSDLADLTLKHGWRTGAIIPELKSEIEIMNTSHYITTVTWLQGLTGLLERMQVYRDAESQMVLQDWIKERQEMRDLARKMFNRQFGSIFRTDHNPTYFLRRLSRFADIYMESLSCLLNYDLHHTFYPKRTPLQHELPVCSEQQNTGTFRIPLGKEMAQIK.

The active-site Nucleophile is Asp-104. Asp-104 and Asp-106 together coordinate Mg(2+). Asp-106 serves as the catalytic Proton donor. 234–242 contributes to the substrate binding site; it reads KEAIRDVHV. Asp-372 is a Mg(2+) binding site.

The protein belongs to the 5'(3')-deoxyribonucleotidase family. Mg(2+) serves as cofactor.

In Xenopus tropicalis (Western clawed frog), this protein is 5'-nucleotidase domain-containing protein 3 (nt5dc3).